Consider the following 347-residue polypeptide: Sensor protein VraS (347 aa).

Transmembrane regions (helical) follow at residues 13-33 (ILVY…VNII) and 43-63 (IFGI…CIIV). One can recognise a Histidine kinase domain in the interval 150–341 (RLARELHDSV…RIEVKAPLNK (192 aa)). H156 is subject to Phosphohistidine.

Autophosphorylated on His-156.

It localises to the cell membrane. The enzyme catalyses ATP + protein L-histidine = ADP + protein N-phospho-L-histidine.. In terms of biological role, member of the two-component regulatory system PprA/PprB involved in biofilm formation by controlling the expression of many related genes including type IVb pili major subunit flp pilin, adhesin bapA or cupE fimbriae. Also modulates quorum-sensing signal production acting on both negative and positive modulators. Functions as a heme sensor histidine kinase which is autophosphorylated at a histidine residue and transfers its phosphate group to PprB. This Staphylococcus aureus (strain COL) protein is Sensor protein VraS (vraS).